A 464-amino-acid polypeptide reads, in one-letter code: MNTLLVGINVAVMLILVGVLYYMQRKHVSFNKRVFTALGVGIIFGLILQFIYEPTSKVIIESNTWFGLIGSGYVKLLQMIVMPLILVSIISAFTKLQLTKNLGKISGLIIGILILTTGIAAAVGIAASAGFDVSATGLQQGDAESARLKLVEERFTSIEKTTIPDKLLELLPTNPFLDLTGARPTSTISVVIFAAFIGIAFIGVKRKYPEQAELFKKMLDAVYAIVMRMVTLILRLTPYGVLALMAKTVAGSDINAILKLGNFVLASYVALIVMFVIHLLLIALSGLNPIQYLKKVFPVLTFAFTSRSSAGAMPLNIEAQKEKLGISEGIANFAASFGVSIGQNGCAGIYPAMLAMMVAPTVGIDPLQPQFILTLIAVVAISSFGVAGVGGGATFAALIVLSTMNLPIGIVALVISVEPLIDMGRTALNVSGSMTAGLISSKWLGELDQDTYNQDDTKTGEIAS.

10 helical membrane passes run 3–23 (TLLV…LYYM), 34–54 (VFTA…IYEP), 73–93 (YVKL…ISAF), 107–127 (GLII…GIAA), 184–204 (PTST…FIGV), 225–245 (IVMR…LALM), 263–283 (FVLA…LLIA), 347–367 (AGIY…IDPL), 371–391 (FILT…GVGG), and 395–415 (FAAL…ALVI).

This sequence belongs to the dicarboxylate/amino acid:cation symporter (DAACS) (TC 2.A.23) family.

It localises to the membrane. In terms of biological role, mediates uptake of L-cystine, the oxidized form of L-cysteine. The sequence is that of L-cystine uptake protein TcyP from Bacillus thuringiensis subsp. konkukian (strain 97-27).